We begin with the raw amino-acid sequence, 484 residues long: Protein nucleotidyltransferase YdiU (484 aa).

Residues G87, G89, R90, K110, D122, G123, R173, and R180 each coordinate ATP. The active-site Proton acceptor is D249. The Mg(2+) site is built by N250 and D259. Residue D259 participates in ATP binding.

Belongs to the SELO family. The cofactor is Mg(2+). Mn(2+) is required as a cofactor.

It catalyses the reaction L-seryl-[protein] + ATP = 3-O-(5'-adenylyl)-L-seryl-[protein] + diphosphate. It carries out the reaction L-threonyl-[protein] + ATP = 3-O-(5'-adenylyl)-L-threonyl-[protein] + diphosphate. The enzyme catalyses L-tyrosyl-[protein] + ATP = O-(5'-adenylyl)-L-tyrosyl-[protein] + diphosphate. The catalysed reaction is L-histidyl-[protein] + UTP = N(tele)-(5'-uridylyl)-L-histidyl-[protein] + diphosphate. It catalyses the reaction L-seryl-[protein] + UTP = O-(5'-uridylyl)-L-seryl-[protein] + diphosphate. It carries out the reaction L-tyrosyl-[protein] + UTP = O-(5'-uridylyl)-L-tyrosyl-[protein] + diphosphate. Its function is as follows. Nucleotidyltransferase involved in the post-translational modification of proteins. It can catalyze the addition of adenosine monophosphate (AMP) or uridine monophosphate (UMP) to a protein, resulting in modifications known as AMPylation and UMPylation. This is Protein nucleotidyltransferase YdiU from Lachnoclostridium phytofermentans (strain ATCC 700394 / DSM 18823 / ISDg) (Clostridium phytofermentans).